Consider the following 149-residue polypeptide: Large ribosomal subunit protein eL19 (149 aa).

The interval 45–130 (VDEGAIQAKD…RDLYDKAGGG (86 aa)) is disordered. Basic residues predominate over residues 58 to 85 (NSRGRARERQKKRAYGHQKGAGSRKGKA). Positions 90–113 (NSKEDWESRIRAQRTKLRELRDEG) are enriched in basic and acidic residues.

This sequence belongs to the eukaryotic ribosomal protein eL19 family. Part of the 50S ribosomal subunit.

Its function is as follows. Binds to the 23S rRNA. Located at the polypeptide exit tunnel on the outside of the subunit. In Haloarcula marismortui (strain ATCC 43049 / DSM 3752 / JCM 8966 / VKM B-1809) (Halobacterium marismortui), this protein is Large ribosomal subunit protein eL19.